A 535-amino-acid polypeptide reads, in one-letter code: MKDYTLSEFLNRRLALLGERNNLSLLEQCLHGIERECLRVTATAELACTPHPQALGAALTNGQVTTDYSESLLEFITPALKNPAETIDNLDRIHRFVYSKLGDELLWSPSMPCPLPDEEHIPIAYYGTSNIGKLKYVYRKGLALRYGKTMQCIAGIHYNFSLPEDAWALLKQTEDFAGDARDYQSHSYIALIRNFRRYSWLLMYLFGASPALDAGFLRGRKHQLEQHFDADTLYLPYATSLRMSDLGYQSDAQADLTPCYNDLVSYTDSLRKAVATPYKPYVEVGTHDQNGEWVQLNTNVLQIENEYYSNIRPKRVTYSGERPIQALVARGVQYVEVRCLDINPFLPTGISLEQSRFIDAFVLYCALEESQQLARHECSNASSNFLSVVKEGRRPGLSLMRDNRPVDLKIWATELMEKITPIARLLDQAQGTDEHLKSIAVQQAKIDDTALTPSAQVLASMEAHNEGFTAFSLRQSQVHAEYFRTHPLSAQEQADFEAQAKTSIEEQAELEATEEVVDFDTFVGSYQASILSISN.

It belongs to the glutamate--cysteine ligase type 1 family. Type 1 subfamily.

It catalyses the reaction L-cysteine + L-glutamate + ATP = gamma-L-glutamyl-L-cysteine + ADP + phosphate + H(+). It participates in sulfur metabolism; glutathione biosynthesis; glutathione from L-cysteine and L-glutamate: step 1/2. This Pseudomonas syringae pv. syringae protein is Glutamate--cysteine ligase.